A 407-amino-acid chain; its full sequence is Polygalacturonase (407 aa).

The signal sequence occupies residues 1–26 (MAPHLNIVPSMFVLLLLFISASKVQP). 2 PbH1 repeats span residues 180–206 (CKNI…HMGK) and 207–228 (SEGV…SIGD). Residue Asn182 is glycosylated (N-linked (GlcNAc...) asparagine). Asp221 serves as the catalytic Proton donor. Cys223 and Cys240 form a disulfide bridge. His244 is a catalytic residue. PbH1 repeat units lie at residues 260 to 281 (VEGI…RIKT) and 290 to 311 (VSEI…LIDQ). N-linked (GlcNAc...) asparagine glycans are attached at residues Asn267, Asn272, Asn302, and Asn331. Disulfide bonds link Cys351–Cys357 and Cys379–Cys395. A PbH1 5 repeat occupies 357–384 (CQNVELADIDIQHNGAEPATSQCLNVKP).

It belongs to the glycosyl hydrolase 28 family. As to expression, pollen.

Its subcellular location is the secreted. It is found in the cell wall. It carries out the reaction (1,4-alpha-D-galacturonosyl)n+m + H2O = (1,4-alpha-D-galacturonosyl)n + (1,4-alpha-D-galacturonosyl)m.. Its function is as follows. May function in the depolymerization of the pectin in its walls during pollen tube elongation, or in that of the pistil during pollination. In Gossypium barbadense (Sea Island cotton), this protein is Polygalacturonase (G9).